The sequence spans 456 residues: tRNA modification GTPase MnmE (456 aa).

Positions 23, 85, and 124 each coordinate (6S)-5-formyl-5,6,7,8-tetrahydrofolate. Residues 220 to 376 (GVAVLIAGKP…LKESIFQTFI (157 aa)) form the TrmE-type G domain. Residue N230 coordinates K(+). Residues 230 to 235 (NVGKSS), 249 to 255 (TSVPGTT), and 274 to 277 (DTAG) each bind GTP. S234 lines the Mg(2+) pocket. Residues T249, V251, and T254 each contribute to the K(+) site. T255 is a Mg(2+) binding site. Residue K456 coordinates (6S)-5-formyl-5,6,7,8-tetrahydrofolate.

It belongs to the TRAFAC class TrmE-Era-EngA-EngB-Septin-like GTPase superfamily. TrmE GTPase family. Homodimer. Heterotetramer of two MnmE and two MnmG subunits. It depends on K(+) as a cofactor.

Its subcellular location is the cytoplasm. In terms of biological role, exhibits a very high intrinsic GTPase hydrolysis rate. Involved in the addition of a carboxymethylaminomethyl (cmnm) group at the wobble position (U34) of certain tRNAs, forming tRNA-cmnm(5)s(2)U34. The polypeptide is tRNA modification GTPase MnmE (Geobacter sulfurreducens (strain ATCC 51573 / DSM 12127 / PCA)).